The sequence spans 216 residues: Large ribosomal subunit protein bL25 (216 aa).

The tract at residues 184-216 (VPPTSDVEEEEGDEDLEEDVEETAAEEEEGVEE) is disordered. Residues 189–216 (DVEEEEGDEDLEEDVEETAAEEEEGVEE) show a composition bias toward acidic residues.

This sequence belongs to the bacterial ribosomal protein bL25 family. CTC subfamily. As to quaternary structure, part of the 50S ribosomal subunit; part of the 5S rRNA/L5/L18/L25 subcomplex. Contacts the 5S rRNA. Binds to the 5S rRNA independently of L5 and L18.

In terms of biological role, this is one of the proteins that binds to the 5S RNA in the ribosome where it forms part of the central protuberance. The protein is Large ribosomal subunit protein bL25 of Desulforapulum autotrophicum (strain ATCC 43914 / DSM 3382 / VKM B-1955 / HRM2) (Desulfobacterium autotrophicum).